The primary structure comprises 203 residues: Inositol diphosphatase DSP3 (203 aa).

The 150-residue stretch at 20-169 folds into the Tyrosine-protein phosphatase domain; sequence NFSMVEDGIY…FDIVSLRQCL (150 aa). The tract at residues 76–88 is WPD loop important for active site topology; sequence FGIEGKTDPPTPM. Residue Cys112 is the Phosphocysteine intermediate of the active site.

Belongs to the protein-tyrosine phosphatase family. Atypical dual-specificity phosphatase Siw14-like subfamily. In terms of assembly, interacts with FLZ1. As to expression, highly expressed in roots, stems and flowers. Expressed at low levels in leaves and siliques.

It is found in the nucleus. It carries out the reaction 5-diphospho-1D-myo-inositol 1,2,3,4,6-pentakisphosphate + H2O = 1D-myo-inositol hexakisphosphate + phosphate + H(+). It catalyses the reaction 1,5-bis(diphospho)-1D-myo-inositol 2,3,4,6-tetrakisphosphate + H2O = 1-diphospho-1D-myo-inositol 2,3,4,5,6-pentakisphosphate + phosphate + 2 H(+). The catalysed reaction is 3,5-bis(diphospho)-1D-myo-inositol 1,2,4,6-tetrakisphosphate + H2O = 3-diphospho-1D-myo-inositol 1,2,4,5,6-pentakisphosphate + phosphate + 2 H(+). The enzyme catalyses 6-diphospho-1D-myo-inositol pentakisphosphate + H2O = 1D-myo-inositol hexakisphosphate + phosphate + H(+). Its function is as follows. Cleaves the beta-phosphate at the 5-position of soluble inositol pyrophosphates. Has highest activity on 5-diphosphoinositol 1,2,3,4,6-pentakisphosphate (5-InsP(7)), 1,5-bis-diphosphoinositol 2,3,4,6-tetrakisphosphate (1,5-InsP(8)) and 3,5-InsP(8). Possesses phosphotyrosine phosphatase activity in vitro. Dephosphorylates the phosphoinositides PI(3,5)P2. Hydrolyzes para-nitrophenyl phosphate and O-methylfluorescein phosphate in vitro. The chain is Inositol diphosphatase DSP3 from Arabidopsis thaliana (Mouse-ear cress).